The following is a 122-amino-acid chain: Large ribosomal subunit protein uL14 (122 aa).

This sequence belongs to the universal ribosomal protein uL14 family. Part of the 50S ribosomal subunit. Forms a cluster with proteins L3 and L19. In the 70S ribosome, L14 and L19 interact and together make contacts with the 16S rRNA in bridges B5 and B8.

Functionally, binds to 23S rRNA. Forms part of two intersubunit bridges in the 70S ribosome. The protein is Large ribosomal subunit protein uL14 of Rickettsia canadensis (strain McKiel).